A 379-amino-acid polypeptide reads, in one-letter code: Glucose-1-phosphate adenylyltransferase (379 aa).

Residues G164, 179–180 (EK), and S190 each bind alpha-D-glucose 1-phosphate.

Belongs to the bacterial/plant glucose-1-phosphate adenylyltransferase family. In terms of assembly, homotetramer.

It carries out the reaction alpha-D-glucose 1-phosphate + ATP + H(+) = ADP-alpha-D-glucose + diphosphate. It functions in the pathway glycan biosynthesis; glycogen biosynthesis. In terms of biological role, involved in the biosynthesis of ADP-glucose, a building block required for the elongation reactions to produce glycogen. Catalyzes the reaction between ATP and alpha-D-glucose 1-phosphate (G1P) to produce pyrophosphate and ADP-Glc. This chain is Glucose-1-phosphate adenylyltransferase, found in Streptococcus uberis (strain ATCC BAA-854 / 0140J).